The sequence spans 460 residues: CCA-adding enzyme (460 aa).

2 residues coordinate ATP: Ser-50 and Arg-53. Ser-50 and Arg-53 together coordinate CTP. Mg(2+)-binding residues include Asp-62, Asp-64, and Asp-117. ATP is bound by residues His-140, Lys-159, and Tyr-168. Positions 140, 159, and 168 each coordinate CTP.

It belongs to the tRNA nucleotidyltransferase/poly(A) polymerase family. Archaeal CCA-adding enzyme subfamily. In terms of assembly, homodimer. Requires Mg(2+) as cofactor.

The enzyme catalyses a tRNA precursor + 2 CTP + ATP = a tRNA with a 3' CCA end + 3 diphosphate. It carries out the reaction a tRNA with a 3' CCA end + 2 CTP + ATP = a tRNA with a 3' CCACCA end + 3 diphosphate. Functionally, catalyzes the addition and repair of the essential 3'-terminal CCA sequence in tRNAs without using a nucleic acid template. Adds these three nucleotides in the order of C, C, and A to the tRNA nucleotide-73, using CTP and ATP as substrates and producing inorganic pyrophosphate. tRNA 3'-terminal CCA addition is required both for tRNA processing and repair. Also involved in tRNA surveillance by mediating tandem CCA addition to generate a CCACCA at the 3' terminus of unstable tRNAs. While stable tRNAs receive only 3'-terminal CCA, unstable tRNAs are marked with CCACCA and rapidly degraded. This chain is CCA-adding enzyme, found in Methanoregula boonei (strain DSM 21154 / JCM 14090 / 6A8).